Here is a 112-residue protein sequence, read N- to C-terminus: DNA-binding protein Memar_1972 (112 aa).

The disordered stretch occupies residues 14-35; the sequence is MEQMQRQAMDQQGMEEEAARQQ.

It belongs to the PDCD5 family.

The sequence is that of DNA-binding protein Memar_1972 from Methanoculleus marisnigri (strain ATCC 35101 / DSM 1498 / JR1).